The sequence spans 104 residues: Circadian clock oscillator protein KaiB (104 aa).

It belongs to the KaiB family. The KaiABC complex composition changes during the circadian cycle to control KaiC phosphorylation. Complexes KaiC(6), KaiA(2-4):KaiC(6), KaiB(6):KaiC(6) and KaiC(6):KaiB(6):KaiA(12) are among the most important forms, many form cooperatively. Undergoes a major conformational rearrangment; in the free state forms homotetramers as a dimer of dimers. When bound to the CI domain of KaiC switches to a monomeric thioredoxin-fold (KaiB(fs)). KaiB(fs) binds CikA, leading it to dephosphorylate phospho-RpaA.

In terms of biological role, key component of the KaiABC oscillator complex, which constitutes the main circadian regulator in cyanobacteria. Complex composition changes during the circadian cycle to control KaiC phosphorylation. KaiA stimulates KaiC autophosphorylation, while KaiB sequesters KaiA, leading to KaiC autodephosphorylation. Phospho-Ser-431 KaiC accumulation triggers binding of KaiB to form the KaiB(6):KaiC(6) complex, leading to changes in output regulators CikA and SasA. KaiB switches to a thioredoxin-like fold (KaiB(fs)) when bound to KaiC. KaiB(6):KaiC(6) formation exposes a site for KaiA binding that sequesters KaiA from KaiC, making the KaiC(6):KaiB(6):KaiA(12) complex that results in KaiC autodephosphorylation. A metamorphic protein which reversibly switches between an inactive tetrameric fold and a rare, thioredoxin-like monomeric fold (KaiB(fs)). KaiB(fs) binds phospho-KaiC, KaiA and CikA. KaiA and CikA compete for binding to KaiB(fs), and KaiB(fs) and SasA compete for binding to KaiC, thus the clock oscillator and output signal pathway are tightly coupled. The protein is Circadian clock oscillator protein KaiB of Trichodesmium erythraeum (strain IMS101).